The following is a 230-amino-acid chain: MVEYLPSTPRYLKVPLIILNVILWLLGLVLVIIGGICVGFFSRFKELQEVGGVSESIKSISVSLPAGVLSIGIFFMVLTVAGCIVAYKEKMVGLVFYTILMLVLLVVLIGIGGEALTYHNADIGIEIEDNWKNISYSNQSVVIKKLEQFFECCCFDESDLKLNCTALCPQDDQKNILYNGTFCYDVIFGAVNSKLYLVGSAGVAIGVIELVSLMFALFLIVRLYKSNSYR.

At 1–20 (MVEYLPSTPRYLKVPLIILN) the chain is on the cytoplasmic side. A helical membrane pass occupies residues 21–41 (VILWLLGLVLVIIGGICVGFF). Residues 42 to 65 (SRFKELQEVGGVSESIKSISVSLP) are Extracellular-facing. A helical transmembrane segment spans residues 66 to 86 (AGVLSIGIFFMVLTVAGCIVA). Residues 87 to 90 (YKEK) are Cytoplasmic-facing. A helical membrane pass occupies residues 91–111 (MVGLVFYTILMLVLLVVLIGI). Over 112–200 (GGEALTYHNA…VNSKLYLVGS (89 aa)) the chain is Extracellular. Residues asparagine 133, asparagine 138, asparagine 163, and asparagine 179 are each glycosylated (N-linked (GlcNAc...) asparagine). A helical transmembrane segment spans residues 201–221 (AGVAIGVIELVSLMFALFLIV). At 222 to 230 (RLYKSNSYR) the chain is on the cytoplasmic side.

Belongs to the tetraspanin (TM4SF) family.

It localises to the membrane. This is Probable tetraspanin tspD (tspD) from Dictyostelium discoideum (Social amoeba).